We begin with the raw amino-acid sequence, 285 residues long: MLLATFKLCAGSSYRHVRSMKGLRQQAVLAIGQELNRRALGGPAPAAWIYQVRRRGSLLGSQLEDSLYSDQELAYIQQGEEAMQRALGILKDQEGWKKESRQVNGDEVLSKVIPDVGKVFRLEVVVDQPMERLYEELVERMEAMGEWNPSVKEIKVLQKIGKDTIITHELAAEAAGNLVGPRDFVSVRCTKRRGSMCVLAGTATLYEEMPQQKGVIRAEHGPTCMVLRPLAGSPSRTKLTWLLSIDLKGWLPKTIINQVLSQTQVDFANHLRKRLESCPALEARC.

A mitochondrion-targeting transit peptide spans 1 to 63 (MLLATFKLCA…RRGSLLGSQL (63 aa)). Phosphoserine; by PKA is present on residues serine 57 and serine 195. Residues 67-280 (LYSDQELAYI…LRKRLESCPA (214 aa)) form the START domain.

May interact with TSPO.

The protein localises to the mitochondrion. The enzyme catalyses cholesterol(in) = cholesterol(out). The protein operates within steroid metabolism; cholesterol metabolism. Its function is as follows. Plays a key role in steroid hormone synthesis by enhancing the metabolism of cholesterol into pregnenolone. Mediates the transfer of cholesterol from the outer mitochondrial membrane to the inner mitochondrial membrane where it is cleaved to pregnenolone. This chain is Steroidogenic acute regulatory protein, mitochondrial (STAR), found in Ovis aries (Sheep).